Here is a 187-residue protein sequence, read N- to C-terminus: MGDPRRRFKKTYETPNHPWIKERIEREKELCRKYGLRRKREVWKAETILRKYRRQARRLISDRTEQGAKEAVQLFNVLKKYGILKIENPTLDDVLSLTVEDILERRLQTLVFRKGLARTPRQARQLIVHGHIAVNGRVVTAPSYMVTVEEEDKISYAKNSPFNDDNHPERAKIVGLVAEETQTQETE.

Residues 105 to 174 (RRLQTLVFRK…DNHPERAKIV (70 aa)) enclose the S4 RNA-binding domain.

The protein belongs to the universal ribosomal protein uS4 family. In terms of assembly, part of the 30S ribosomal subunit. Contacts protein S5. The interaction surface between S4 and S5 is involved in control of translational fidelity.

Its function is as follows. One of the primary rRNA binding proteins, it binds directly to 16S rRNA where it nucleates assembly of the body of the 30S subunit. Functionally, with S5 and S12 plays an important role in translational accuracy. This is Small ribosomal subunit protein uS4 from Methanocaldococcus jannaschii (strain ATCC 43067 / DSM 2661 / JAL-1 / JCM 10045 / NBRC 100440) (Methanococcus jannaschii).